A 103-amino-acid polypeptide reads, in one-letter code: Large ribosomal subunit protein eL30 (103 aa).

It belongs to the eukaryotic ribosomal protein eL30 family.

This chain is Large ribosomal subunit protein eL30, found in Methanosarcina mazei (strain ATCC BAA-159 / DSM 3647 / Goe1 / Go1 / JCM 11833 / OCM 88) (Methanosarcina frisia).